Consider the following 268-residue polypeptide: Interleukin-1 beta (268 aa).

Positions 1–116 (MAEVPELASE…TRNNDACVHD (116 aa)) are excised as a propeptide.

It belongs to the IL-1 family. As to quaternary structure, monomer. In its precursor form, weakly interacts with full-length MEFV; the mature cytokine does not interact at all. Interacts with integrins ITGAV:ITGBV and ITGA5:ITGB1; integrin-binding is required for IL1B signaling. Interacts with cargo receptor TMED10; the interaction is direct and is required for the secretion of IL1B mature form. Interacts with HSP90AB1; the interaction facilitates cargo translocation into the ERGIC. Interacts with HSP90B1; the interaction facilitates cargo translocation into the ERGIC.

The protein localises to the cytoplasm. Its subcellular location is the cytosol. It localises to the secreted. The protein resides in the lysosome. It is found in the extracellular exosome. In terms of biological role, potent pro-inflammatory cytokine. Initially discovered as the major endogenous pyrogen, induces prostaglandin synthesis, neutrophil influx and activation, T-cell activation and cytokine production, B-cell activation and antibody production, and fibroblast proliferation and collagen production. Promotes Th17 differentiation of T-cells. Synergizes with IL12/interleukin-12 to induce IFNG synthesis from T-helper 1 (Th1) cells. Plays a role in angiogenesis by inducing VEGF production synergistically with TNF and IL6. Involved in transduction of inflammation downstream of pyroptosis: its mature form is specifically released in the extracellular milieu by passing through the gasdermin-D (GSDMD) pore. In Macaca fascicularis (Crab-eating macaque), this protein is Interleukin-1 beta (IL1B).